The primary structure comprises 448 residues: Probable glycine dehydrogenase (decarboxylating) subunit 1 (448 aa).

It belongs to the GcvP family. N-terminal subunit subfamily. As to quaternary structure, the glycine cleavage system is composed of four proteins: P, T, L and H. In this organism, the P 'protein' is a heterodimer of two subunits.

The enzyme catalyses N(6)-[(R)-lipoyl]-L-lysyl-[glycine-cleavage complex H protein] + glycine + H(+) = N(6)-[(R)-S(8)-aminomethyldihydrolipoyl]-L-lysyl-[glycine-cleavage complex H protein] + CO2. The glycine cleavage system catalyzes the degradation of glycine. The P protein binds the alpha-amino group of glycine through its pyridoxal phosphate cofactor; CO(2) is released and the remaining methylamine moiety is then transferred to the lipoamide cofactor of the H protein. The sequence is that of Probable glycine dehydrogenase (decarboxylating) subunit 1 (gcvPA) from Bacillus subtilis (strain 168).